We begin with the raw amino-acid sequence, 125 residues long: Fluoride-specific ion channel FluC (125 aa).

The next 4 helical transmembrane spans lie at 5 to 25, 33 to 53, 69 to 89, and 101 to 121; these read FVFI…LAGF, FFPF…GFLW, FVLV…LETG, and IVNL…GIVL. Gly76 and Thr79 together coordinate Na(+).

The protein belongs to the fluoride channel Fluc/FEX (TC 1.A.43) family.

The protein localises to the cell inner membrane. It catalyses the reaction fluoride(in) = fluoride(out). Na(+) is not transported, but it plays an essential structural role and its presence is essential for fluoride channel function. In terms of biological role, fluoride-specific ion channel. Important for reducing fluoride concentration in the cell, thus reducing its toxicity. This Desulforapulum autotrophicum (strain ATCC 43914 / DSM 3382 / VKM B-1955 / HRM2) (Desulfobacterium autotrophicum) protein is Fluoride-specific ion channel FluC.